Consider the following 491-residue polypeptide: UDP-N-acetylmuramoyl-L-alanyl-D-glutamate--2,6-diaminopimelate ligase (491 aa).

Serine 30 provides a ligand contact to UDP-N-acetyl-alpha-D-muramoyl-L-alanyl-D-glutamate. 108-114 (GTNGKTT) contacts ATP. UDP-N-acetyl-alpha-D-muramoyl-L-alanyl-D-glutamate-binding positions include asparagine 149, 150–151 (TT), serine 177, glutamine 183, and arginine 185. Position 217 is an N6-carboxylysine (lysine 217). Meso-2,6-diaminopimelate is bound by residues arginine 383, 407–410 (DNPR), glycine 458, and glutamate 462. A Meso-diaminopimelate recognition motif motif is present at residues 407–410 (DNPR).

This sequence belongs to the MurCDEF family. MurE subfamily. Mg(2+) is required as a cofactor. Carboxylation is probably crucial for Mg(2+) binding and, consequently, for the gamma-phosphate positioning of ATP.

The protein resides in the cytoplasm. It catalyses the reaction UDP-N-acetyl-alpha-D-muramoyl-L-alanyl-D-glutamate + meso-2,6-diaminopimelate + ATP = UDP-N-acetyl-alpha-D-muramoyl-L-alanyl-gamma-D-glutamyl-meso-2,6-diaminopimelate + ADP + phosphate + H(+). It functions in the pathway cell wall biogenesis; peptidoglycan biosynthesis. Catalyzes the addition of meso-diaminopimelic acid to the nucleotide precursor UDP-N-acetylmuramoyl-L-alanyl-D-glutamate (UMAG) in the biosynthesis of bacterial cell-wall peptidoglycan. This is UDP-N-acetylmuramoyl-L-alanyl-D-glutamate--2,6-diaminopimelate ligase from Listeria innocua serovar 6a (strain ATCC BAA-680 / CLIP 11262).